The primary structure comprises 794 residues: Cilia- and flagella-associated protein 184 (794 aa).

2 disordered regions span residues 1-105 (MASE…VNSE) and 386-458 (AHEE…QQDT). Residues 24–35 (QMQQYMMEMQRQ) are compositionally biased toward low complexity. A compositionally biased stretch (acidic residues) spans 49-69 (EGYEEGQEGEGYGEEYGDQDY). 3 stretches are compositionally biased toward basic and acidic residues: residues 89-103 (QVNEMHQDRYDRRVN), 386-411 (AHEEQERKEREENDAKRLKQSRKDYG), and 431-445 (ISDKDKHHDSMHAEQ). Low complexity predominate over residues 446 to 456 (EQNQQAAQQQQ). Coiled coils occupy residues 461–613 (NKEI…LRLR) and 638–775 (FEQL…ANQI). A compositionally biased stretch (polar residues) spans 774-787 (QISTQNMQSQNNSL). The segment at 774 to 794 (QISTQNMQSQNNSLKKPYQPY) is disordered.

It belongs to the CFAP184 family. As to quaternary structure, forms a complex with CFAP263; the interaction is required for functional activity in cilia.

It is found in the cell projection. The protein resides in the cilium. In complex with CFAP263, acts as a regulator of ciliary beating that connects radial spoke 3 (RS3) to the inner dynein arm (IDA) and the nexin-dynein regulatory complex (N-DRC). The complex is positioned parallel to N-DRC and forms a connection between the arch at the base of RS3, the IDA tail and N-DRC. The sequence is that of Cilia- and flagella-associated protein 184 (CFAP184) from Tetrahymena thermophila (strain SB210).